A 480-amino-acid chain; its full sequence is Carboxy-terminal processing protease CtpB (480 aa).

The signal sequence occupies residues 1-23 (MNQKIMAVIAAGSMLFGGAGVYA). A PDZ domain is found at 92–182 (SVYMDKQTAK…SSVSMKIQRP (91 aa)). Positions 113–116 (GIGA) are peptide binding. Serine 309 (nucleophile) is an active-site residue. Catalysis depends on charge relay system residues lysine 334 and glutamine 338.

The protein belongs to the peptidase S41A family. In terms of assembly, homodimer. Is cleaved by SpoIVB in vitro and in vivo but this cleavage does not appear to be necessary for CtpB activation. CtpB can also cleave itself in vivo.

Its subcellular location is the forespore intermembrane space. The catalysed reaction is The enzyme shows specific recognition of a C-terminal tripeptide, Xaa-Yaa-Zaa, in which Xaa is preferably Ala or Leu, Yaa is preferably Ala or Tyr, and Zaa is preferably Ala, but then cleaves at a variable distance from the C-terminus. A typical cleavage is -Ala-Ala-|-Arg-Ala-Ala-Lys-Glu-Asn-Tyr-Ala-Leu-Ala-Ala.. With respect to regulation, activated by peptide binding to the PDZ domain. Its function is as follows. Involved in the signal transduction pathway leading to the proteolytic activation of the mother cell transcription factor pro-sigma-K during sporulation. The signaling serine protease CtpB triggers pro-sigma-K processing by cleaving the pre-processed regulatory protein SpoIVFA and is necessary for the proper timing of sigma-K activation. The chain is Carboxy-terminal processing protease CtpB (ctpB) from Bacillus subtilis (strain 168).